The primary structure comprises 789 residues: Polyribonucleotide nucleotidyltransferase (789 aa).

D494 and D500 together coordinate Mg(2+). A KH domain is found at 561 to 620 (PRIESIFINKDKIRNVIGSGGKNIREICEKTGARVEIMQDGTVMIYAINNDAVEYAKNMI). Positions 630 to 697 (GKVFDGTVIE…DREYVQLSMR (68 aa)) constitute an S1 motif domain. Residues 709–789 (GELYNIRKTN…NEVPRKPRFF (81 aa)) are disordered. Over residues 737–749 (SEKKRRGSGRSRR) the composition is skewed to basic residues. A compositionally biased stretch (low complexity) spans 763-780 (NNGFGNGNRSFNDNRNGN).

It belongs to the polyribonucleotide nucleotidyltransferase family. Mg(2+) serves as cofactor.

The protein localises to the cytoplasm. The enzyme catalyses RNA(n+1) + phosphate = RNA(n) + a ribonucleoside 5'-diphosphate. Involved in mRNA degradation. Catalyzes the phosphorolysis of single-stranded polyribonucleotides processively in the 3'- to 5'-direction. In Ehrlichia ruminantium (strain Gardel), this protein is Polyribonucleotide nucleotidyltransferase.